A 645-amino-acid chain; its full sequence is DNA mismatch repair protein MutL (645 aa).

It belongs to the DNA mismatch repair MutL/HexB family.

Its function is as follows. This protein is involved in the repair of mismatches in DNA. It is required for dam-dependent methyl-directed DNA mismatch repair. May act as a 'molecular matchmaker', a protein that promotes the formation of a stable complex between two or more DNA-binding proteins in an ATP-dependent manner without itself being part of a final effector complex. In Pediococcus pentosaceus (strain ATCC 25745 / CCUG 21536 / LMG 10740 / 183-1w), this protein is DNA mismatch repair protein MutL.